The primary structure comprises 440 residues: Protein scalloped (440 aa).

The disordered stretch occupies residues 32–65; the sequence is TEQQAVGPGTIPSPWTPVNAGPPGALGSADTNGS. Residues 86–162 constitute a DNA-binding region (TEA); the sequence is SADAEGVWSP…QVLARRKLRE (77 aa).

In terms of assembly, the C-terminus of sd interacts with the C-terminal serine-rich protein domain of vg, to form a complex which acts as a selector for wing development. Interacts (via C-terminus) with yki (via N-terminus) and this interaction enhances its transcriptional activity. Subset of neuroblasts in the central nervous system and in the peripheral sense organs of the embryo. Expressed in the developing wing primordia initially along the D/V wing boundary, and by the late third larval instar, maximal expression is seen in cells at the D/V wing disk boundary. Less expression in cells located farther from this boundary. Also expressed in wing progenitor cells.

The protein localises to the nucleus. In terms of biological role, transcription factor which plays a key role in the Hippo/SWH (Sav/Wts/Hpo) signaling pathway, a signaling pathway that plays a pivotal role in organ size control and tumor suppression by restricting proliferation and promoting apoptosis. The core of this pathway is composed of a kinase cascade wherein Hippo (Hpo), in complex with its regulatory protein Salvador (Sav), phosphorylates and activates Warts (Wts) in complex with its regulatory protein Mats, which in turn phosphorylates and inactivates the Yorkie (Yki) oncoprotein. The Hippo/SWH signaling pathway inhibits the activity of the transcriptional complex formed by Scalloped (sd) and Yki and the target genes of this pathway include cyclin-E (cycE), diap1 and bantam. Sd promotes nuclear localization of Yki. Involved in the regulation of cell-specific gene expression during development, particularly in the differentiation of the nervous system. When in combination with vestigial (vg) it acts as a transcriptional activation complex that regulates gene expression in the wing. Binding to vg switches the DNA target selectivity of sd. Required autonomously for cell proliferation and viability within the wing blade. Required for proper sensory organ precursor (SOP) differentiation at the wing margin; required for correct expression of sens. This chain is Protein scalloped (sd), found in Drosophila melanogaster (Fruit fly).